The following is a 180-amino-acid chain: Uterocalin (180 aa).

The signal sequence occupies residues 1–18 (MNLLLLAMGLILPRRPHA). Cysteines 82 and 175 form a disulfide. A glycan (N-linked (GlcNAc...) asparagine) is linked at Asn-101.

The protein belongs to the calycin superfamily. Lipocalin family. In terms of tissue distribution, expressed in glandular and lumenal epithelia of the endometrium. Is transferred to the embryonic capsule, the conceptus and the yolk sac.

It localises to the secreted. In terms of biological role, binds fatty acids and retinol. Is specialized for the preattachment embryo. May be important to maintain the pregnancy and may transport small hydrophobic ligands from mother to the developing embryo. This chain is Uterocalin, found in Equus caballus (Horse).